The primary structure comprises 537 residues: Hydroxylamine reductase (537 aa).

[4Fe-4S] cluster contacts are provided by Cys3, Cys6, Cys15, and Cys21. Hybrid [4Fe-2O-2S] cluster-binding residues include His239, Glu263, Cys307, Cys393, Cys421, Cys446, Glu480, and Lys482. The residue at position 393 (Cys393) is a Cysteine persulfide.

The protein belongs to the HCP family. [4Fe-4S] cluster serves as cofactor. It depends on hybrid [4Fe-2O-2S] cluster as a cofactor.

The protein localises to the cytoplasm. It catalyses the reaction A + NH4(+) + H2O = hydroxylamine + AH2 + H(+). Functionally, catalyzes the reduction of hydroxylamine to form NH(3) and H(2)O. This chain is Hydroxylamine reductase, found in Lawsonia intracellularis (strain PHE/MN1-00).